The sequence spans 111 residues: MSKGFGPMGQFQEALKRVKQIQEGSAKLQDELAALSIEGVAGGGLVKVTLSGNQEPTGVTIDPQLLSESKEVVEDLLLTAYKDAYTKSAETMKAKMQELTGGMELPPGLGF.

It belongs to the YbaB/EbfC family. As to quaternary structure, homodimer.

It is found in the cytoplasm. Its subcellular location is the nucleoid. Its function is as follows. Binds to DNA and alters its conformation. May be involved in regulation of gene expression, nucleoid organization and DNA protection. The sequence is that of Nucleoid-associated protein glr3498 from Gloeobacter violaceus (strain ATCC 29082 / PCC 7421).